The chain runs to 855 residues: Potassium channel AKT2 (855 aa).

Over residues 1-12 the composition is skewed to low complexity; it reads MKTSSFESASSS. The interval 1-24 is disordered; it reads MKTSSFESASSSGGSGGGGGGGGG. The Cytoplasmic portion of the chain corresponds to 1 to 75; sequence MKTSSFESAS…PLDSRYRCWD (75 aa). The segment covering 13 to 24 has biased composition (gly residues); that stretch reads GGSGGGGGGGGG. The helical transmembrane segment at 76–96 threads the bilayer; sequence TFMVVLVAYSAWVYPFEVAFM. The Extracellular portion of the chain corresponds to 97–105; sequence NASPKGGLE. The chain crosses the membrane as a helical span at residues 106–126; the sequence is VADIVVDLFFAVDIVLTFFVA. Topologically, residues 127–149 are cytoplasmic; it reads YIDSRTQLLVRDRRRIATRYLST. Residues 150 to 170 form a helical membrane-spanning segment; the sequence is FFIMDVASTIPFQGLAYIVTG. Residues 171–179 are Extracellular-facing; the sequence is EVRESPAFS. Residues 180-200 form a helical; Voltage-sensor membrane-spanning segment; sequence LLGILRLWRLRKVKQFFTRLE. Topologically, residues 201–214 are cytoplasmic; the sequence is KDIRFNYFWIRCAR. Residues 215 to 235 form a helical membrane-spanning segment; it reads LIAVTLFLVHCAGCLYYLIAD. Residues 236 to 262 lie on the Extracellular side of the membrane; sequence RYPHREKTWIGAVIPDFQEASLWIRYT. An intramembrane region (pore-forming) is located at residues 263–282; it reads SSVYWSITTMTTVGYGDMHA. At 283-285 the chain is on the extracellular side; sequence QNT. A helical membrane pass occupies residues 286–306; it reads VEMIFNIFYMLFNLGLTAYLI. The Cytoplasmic portion of the chain corresponds to 307–855; that stretch reads GNMTNLVVEG…VASMDSVSGS (549 aa). Residue 391 to 511 participates in a nucleoside 3',5'-cyclic phosphate binding; it reads LFKGVSREVL…VVIIKNFLKH (121 aa). ANK repeat units follow at residues 536–565, 569–598, 602–631, 634–663, and 667–696; these read NIPC…DPDV, KGRT…NVNI, QGNT…VSSP, AAGD…AVDS, and DGAT…SVDR. Residues 744–765 are disordered; sequence EVGSSGDSRNGRRQSARSDGAH. A KHA domain is found at 768-855; it reads RVSIYRGHPF…VASMDSVSGS (88 aa).

This sequence belongs to the potassium channel family. Plant (TC 1.A.1.4) subfamily. In terms of assembly, the potassium channel is probably a homo- or heterotetrameric complex of pore-forming subunits.

The protein localises to the membrane. In terms of biological role, probable inward-rectifying potassium channel. Assuming opened or closed conformations in response to the voltage difference across the membrane, the channel is activated by hyperpolarization. The protein is Potassium channel AKT2 of Oryza sativa subsp. japonica (Rice).